A 385-amino-acid polypeptide reads, in one-letter code: tRNA-specific 2-thiouridylase MnmA (385 aa).

ATP-binding positions include 29–36 (GLSGGVDS) and Leu55. Cys116 (nucleophile) is an active-site residue. The cysteines at positions 116 and 225 are disulfide-linked. Gly141 contacts ATP. Residues 175–177 (KDQ) form an interaction with tRNA region. Cys225 acts as the Cysteine persulfide intermediate in catalysis. Positions 330-331 (RY) are interaction with tRNA.

This sequence belongs to the MnmA/TRMU family.

It is found in the cytoplasm. The catalysed reaction is S-sulfanyl-L-cysteinyl-[protein] + uridine(34) in tRNA + AH2 + ATP = 2-thiouridine(34) in tRNA + L-cysteinyl-[protein] + A + AMP + diphosphate + H(+). Functionally, catalyzes the 2-thiolation of uridine at the wobble position (U34) of tRNA, leading to the formation of s(2)U34. This chain is tRNA-specific 2-thiouridylase MnmA, found in Prochlorococcus marinus (strain MIT 9301).